The following is a 443-amino-acid chain: ATP-dependent protease ATPase subunit HslU (443 aa).

Residues isoleucine 19, 61–66 (GVGKTE), aspartate 256, glutamate 321, and arginine 393 contribute to the ATP site.

The protein belongs to the ClpX chaperone family. HslU subfamily. As to quaternary structure, a double ring-shaped homohexamer of HslV is capped on each side by a ring-shaped HslU homohexamer. The assembly of the HslU/HslV complex is dependent on binding of ATP.

The protein resides in the cytoplasm. Its function is as follows. ATPase subunit of a proteasome-like degradation complex; this subunit has chaperone activity. The binding of ATP and its subsequent hydrolysis by HslU are essential for unfolding of protein substrates subsequently hydrolyzed by HslV. HslU recognizes the N-terminal part of its protein substrates and unfolds these before they are guided to HslV for hydrolysis. This is ATP-dependent protease ATPase subunit HslU from Ralstonia pickettii (strain 12J).